Reading from the N-terminus, the 217-residue chain is Somatotropin (217 aa).

Residues 1-26 (MAPGSWFSPLFIAVITLGLQWPKEAA) form the signal peptide. H46 contacts Zn(2+). A disulfide bridge connects residues C79 and C190. E199 contacts Zn(2+). Residues C207 and C215 are joined by a disulfide bond.

The protein belongs to the somatotropin/prolactin family.

Its subcellular location is the secreted. In terms of biological role, growth hormone plays an important role in growth control. This chain is Somatotropin (GH), found in Struthio camelus (Common ostrich).